The sequence spans 40 residues: RNA replication protein (40 aa).

Belongs to the potexviruses/carlaviruses RNA replication protein family.

The catalysed reaction is RNA(n) + a ribonucleoside 5'-triphosphate = RNA(n+1) + diphosphate. The enzyme catalyses ATP + H2O = ADP + phosphate + H(+). Functionally, RNA replication. The central part of this protein possibly functions as an ATP-binding helicase. The chain is RNA replication protein from Lily symptomless virus (LSV).